Consider the following 584-residue polypeptide: Asparagine synthetase [glutamine-hydrolyzing] 1 (584 aa).

C2 serves as the catalytic For GATase activity. The region spanning 2–185 is the Glutamine amidotransferase type-2 domain; that stretch reads CGILAVLGCS…PGHFYSSKLG (184 aa). L-glutamine-binding positions include 50–54, 75–77, and D98; these read RLAVI and NGE. The Asparagine synthetase domain maps to 193-516; it reads PPWFNESVPS…PQNSARLTVP (324 aa). ATP is bound by residues L231, V267, and 341 to 342; that span reads SG.

It catalyses the reaction L-aspartate + L-glutamine + ATP + H2O = L-asparagine + L-glutamate + AMP + diphosphate + H(+). It participates in amino-acid biosynthesis; L-asparagine biosynthesis; L-asparagine from L-aspartate (L-Gln route): step 1/1. Its function is as follows. Essential for nitrogen assimilation, distribution and remobilization within the plant via the phloem. In Arabidopsis thaliana (Mouse-ear cress), this protein is Asparagine synthetase [glutamine-hydrolyzing] 1 (ASN1).